The sequence spans 205 residues: Interleukin-6 (205 aa).

Residues 1-21 (RFTSAFSLGLLLVTATAFPTP) form the signal peptide. A disulfide bridge links Cys64 with Cys70. A Phosphoserine modification is found at Ser73. An intrachain disulfide couples Cys93 to Cys103. Asn164 carries N-linked (GlcNAc...) asparagine glycosylation.

It belongs to the IL-6 superfamily. In terms of assembly, component of a hexamer of two molecules each of IL6, IL6R and IL6ST; first binds to IL6R to associate with the signaling subunit IL6ST. Interacts with IL6R (via the N-terminal ectodomain); this interaction may be affected by IL6R-binding with SORL1, hence decreasing IL6 cis signaling. Interacts with SORL1 (via the N-terminal ectodomain); this interaction leads to IL6 internalization and lysosomal degradation. May form a trimeric complex with the soluble SORL1 ectodomain and soluble IL6R receptor; this interaction might stabilize circulating IL6, hence promoting IL6 trans signaling.

The protein localises to the secreted. In terms of biological role, cytokine with a wide variety of biological functions in immunity, tissue regeneration, and metabolism. Binds to IL6R, then the complex associates to the signaling subunit IL6ST/gp130 to trigger the intracellular IL6-signaling pathway. The interaction with the membrane-bound IL6R and IL6ST stimulates 'classic signaling', whereas the binding of IL6 and soluble IL6R to IL6ST stimulates 'trans-signaling'. Alternatively, 'cluster signaling' occurs when membrane-bound IL6:IL6R complexes on transmitter cells activate IL6ST receptors on neighboring receiver cells. IL6 is a potent inducer of the acute phase response. Rapid production of IL6 contributes to host defense during infection and tissue injury, but excessive IL6 synthesis is involved in disease pathology. In the innate immune response, is synthesized by myeloid cells, such as macrophages and dendritic cells, upon recognition of pathogens through toll-like receptors (TLRs) at the site of infection or tissue injury. In the adaptive immune response, is required for the differentiation of B cells into immunoglobulin-secreting cells. Plays a major role in the differentiation of CD4(+) T cell subsets. Essential factor for the development of T follicular helper (Tfh) cells that are required for the induction of germinal-center formation. Required to drive naive CD4(+) T cells to the Th17 lineage. Also required for proliferation of myeloma cells and the survival of plasmablast cells. Functionally, acts as an essential factor in bone homeostasis and on vessels directly or indirectly by induction of VEGF, resulting in increased angiogenesis activity and vascular permeability. Induces, through 'trans-signaling' and synergistically with IL1B and TNF, the production of VEGF. Involved in metabolic controls, is discharged into the bloodstream after muscle contraction increasing lipolysis and improving insulin resistance. 'Trans-signaling' in central nervous system also regulates energy and glucose homeostasis. Mediates, through GLP-1, crosstalk between insulin-sensitive tissues, intestinal L cells and pancreatic islets to adapt to changes in insulin demand. Also acts as a myokine. Plays a protective role during liver injury, being required for maintenance of tissue regeneration. Also has a pivotal role in iron metabolism by regulating HAMP/hepcidin expression upon inflammation or bacterial infection. Through activation of IL6ST-YAP-NOTCH pathway, induces inflammation-induced epithelial regeneration. The chain is Interleukin-6 (IL6) from Orcinus orca (Killer whale).